A 172-amino-acid chain; its full sequence is Endoribonuclease YbeY (172 aa).

Zn(2+) contacts are provided by His137, His141, and His147.

Belongs to the endoribonuclease YbeY family. Zn(2+) serves as cofactor.

The protein resides in the cytoplasm. Single strand-specific metallo-endoribonuclease involved in late-stage 70S ribosome quality control and in maturation of the 3' terminus of the 16S rRNA. The chain is Endoribonuclease YbeY from Dehalococcoides mccartyi (strain ATCC BAA-2266 / KCTC 15142 / 195) (Dehalococcoides ethenogenes (strain 195)).